Consider the following 185-residue polypeptide: Urease accessory protein UreE (185 aa).

The interval Leu-153–His-185 is disordered. Positions Gly-162 to His-175 are enriched in basic residues. The segment covering His-176–His-185 has biased composition (basic and acidic residues).

Belongs to the UreE family.

The protein localises to the cytoplasm. In terms of biological role, involved in urease metallocenter assembly. Binds nickel. Probably functions as a nickel donor during metallocenter assembly. In Haemophilus influenzae (strain 86-028NP), this protein is Urease accessory protein UreE.